Consider the following 485-residue polypeptide: Acyltransferase cm3D (485 aa).

Histidine 169 functions as the Proton acceptor in the catalytic mechanism.

The protein belongs to the plant acyltransferase family. Monomer.

The protein operates within secondary metabolite biosynthesis. Functionally, acyltransferase; part of the gene cluster that mediates the biosynthesis of beauveriolides I and III, cyclodepsipeptides acting as inhibitors of the acyl-CoA:cholesterol acyltransferase. The HR-PKS cm3B initiates the biosynthesis of beauveriolides by iteratively catalyzing the formation of the linear polyketide chain. The ATP-dependent acetyl-CoA ligase cm3D converts the polyketide carboxylic acid to a CoA thioester which id shuttled to the first T domain in the NRPS cm3A by the acetyltransferase cm3C. Cm3A contains 13 domains and assembles the polyketide chain, L-phenylalanine, L-alanine, and D-leucine (or D-allo-isoleucine) to form beauveriolide I (or beauveriolide III). The production of both beauveriolides I and III suggests the substrate adaptability of cm3B, using different amino acids as substrates. This is Acyltransferase cm3D from Cordyceps militaris (strain CM01) (Caterpillar fungus).